The following is a 231-amino-acid chain: Flagellar L-ring protein (231 aa).

A signal peptide spans 1 to 18 (MNRLLSLFALGGAVLLAG). Cys19 is lipidated: N-palmitoyl cysteine. Cys19 carries the S-diacylglycerol cysteine lipid modification.

This sequence belongs to the FlgH family. In terms of assembly, the basal body constitutes a major portion of the flagellar organelle and consists of four rings (L,P,S, and M) mounted on a central rod.

The protein localises to the cell outer membrane. It localises to the bacterial flagellum basal body. Assembles around the rod to form the L-ring and probably protects the motor/basal body from shearing forces during rotation. This is Flagellar L-ring protein from Pseudomonas putida (strain W619).